A 95-amino-acid polypeptide reads, in one-letter code: Large ribosomal subunit protein uL23 (95 aa).

It belongs to the universal ribosomal protein uL23 family. In terms of assembly, part of the 50S ribosomal subunit. Contacts protein L29, and trigger factor when it is bound to the ribosome.

One of the early assembly proteins it binds 23S rRNA. One of the proteins that surrounds the polypeptide exit tunnel on the outside of the ribosome. Forms the main docking site for trigger factor binding to the ribosome. The protein is Large ribosomal subunit protein uL23 of Desulfitobacterium hafniense (strain DSM 10664 / DCB-2).